A 1025-amino-acid polypeptide reads, in one-letter code: Protein mono-ADP-ribosyltransferase PARP10 (1025 aa).

The residue at position 101 (Thr101) is a Phosphothreonine. Glu106 bears the ADP-ribosyl glutamic acid mark. N6-(ADP-ribosyl)lysine is present on Lys140. Residues 318–346 are disordered; sequence GIMTTGSGQEPGQSGTSLRTGPMGSLGQA. Positions 321 to 336 are enriched in polar residues; it reads TTGSGQEPGQSGTSLR. 3 positions are modified to phosphoserine: Ser378, Ser423, and Ser431. Disordered stretches follow at residues 569–589 and 617–644; these read VLPGNAHTLWTPDSTGGDQED and LEEEGPQEQPEEEVTPGHEEEEPVAPST. The span at 617–639 shows a compositional bias: acidic residues; the sequence is LEEEGPQEQPEEEVTPGHEEEEP. 2 short sequence motifs (ubiquitin-interacting) span residues 650 to 667 and 673 to 690; these read LEEEAALQLALHRSLEPQ and QEEAAALRQALTLSLLEQ. Ser663 carries the phosphoserine modification. Residues 700–907 are myc binding; sequence DGGTDGKAQL…CAHGFNRSFC (208 aa). Residues 806–1025 enclose the PARP catalytic domain; the sequence is PTLAGQTLKG…SGLPGRSPDT (220 aa). Residues 831–838 carry the PIP-box motif; that stretch reads QEVVRAFY. Glu882 carries the post-translational modification ADP-ribosyl glutamic acid. Lys916 carries the N6-(ADP-ribosyl)lysine modification. Lys916 carries the post-translational modification N6-acetyllysine. Residues 1006-1025 form a disordered region; it reads HVPRASPDDPSGLPGRSPDT. Ser1011 carries the post-translational modification Phosphoserine.

Belongs to the ARTD/PARP family. As to quaternary structure, interacts with MYC. Interacts with PARP14. Interacts (via-PIP box and ubiquitin-interacting motifs) with PCNA. Stimulated through its phosphorylation by CDK2. Acquires CDK-dependent phosphorylation through late-G1 to S phase, and from prometaphase to cytokinesis in the nucleolar organizing regions. Phosphorylation is suppressed in growth-arrested cells. Post-translationally, auto-mono-ADP-ribosylated on glutamate and lysine residues. In terms of tissue distribution, highly expressed in spleen and thymus. Intermediate levels in liver, kidney, pancreas, prostate, testis, ovary, intestine, and leukocytes. Low expression in heart, brain, placenta, lung, skeletal muscle, and colon.

Its subcellular location is the nucleus. The protein localises to the nucleolus. It localises to the cytoplasm. The enzyme catalyses L-lysyl-[protein] + NAD(+) = N(6)-(ADP-D-ribosyl)-L-lysyl-[protein] + nicotinamide + H(+). It carries out the reaction L-aspartyl-[protein] + NAD(+) = 4-O-(ADP-D-ribosyl)-L-aspartyl-[protein] + nicotinamide. It catalyses the reaction L-glutamyl-[protein] + NAD(+) = 5-O-(ADP-D-ribosyl)-L-glutamyl-[protein] + nicotinamide. Its function is as follows. ADP-ribosyltransferase that mediates mono-ADP-ribosylation of glutamate and aspartate residues on target proteins. In contrast to PARP1 and PARP2, it is not able to mediate poly-ADP-ribosylation. Catalyzes mono-ADP-ribosylation of GSK3B, leading to negatively regulate GSK3B kinase activity. Involved in translesion DNA synthesis in response to DNA damage via its interaction with PCNA. The sequence is that of Protein mono-ADP-ribosyltransferase PARP10 from Homo sapiens (Human).